A 254-amino-acid chain; its full sequence is Protein odd-skipped-related 2 (254 aa).

C2H2-type zinc fingers lie at residues 124–146 (FICKYCDRHFTKSYNLLIHERTH), 152–174 (YSCDVCGKAFRRQDHLRDHKYIH), and 180–202 (FKCEICGKGFCQSRTLLVHRATH).

This sequence belongs to the Odd C2H2-type zinc-finger protein family.

It localises to the nucleus. May function as transcription regulator. Required for morphogenesis and function of the digestive tract. This chain is Protein odd-skipped-related 2, found in Caenorhabditis elegans.